We begin with the raw amino-acid sequence, 502 residues long: Protein krueppel (502 aa).

Disordered stretches follow at residues 115–164 (PPQG…KLSV) and 178–202 (DMYH…THDG). 2 stretches are compositionally biased toward low complexity: residues 119–136 (THLH…STPL) and 183–198 (SGGP…SPNS). 5 C2H2-type zinc fingers span residues 222 to 244 (FTCK…ERTH), 250 to 272 (FECP…MRLH), 278 to 300 (YHCS…LRVH), 306 to 328 (YTCE…MLVH), and 334 to 354 (FECE…NHKC). Disordered stretches follow at residues 399–427 (NESV…SVDG) and 445–502 (RLPP…HQQH). Acidic residues predominate over residues 410–419 (EDDGPLDLSE). S468, S471, and S477 each carry phosphoserine. Over residues 482-491 (DDIDLYDLDD) the composition is skewed to acidic residues.

It belongs to the krueppel C2H2-type zinc-finger protein family.

The protein resides in the nucleus. In terms of biological role, krueppel is a gap class segmentation protein. It is involved in the segmentation of the embryo and in the differentiation of the Malpighian tubules. This is Protein krueppel (Kr) from Drosophila melanogaster (Fruit fly).